Here is a 210-residue protein sequence, read N- to C-terminus: Thiamine-phosphate synthase (210 aa).

Residues 43–47 and asparagine 75 contribute to the 4-amino-2-methyl-5-(diphosphooxymethyl)pyrimidine site; that span reads QLREK. 2 residues coordinate Mg(2+): aspartate 76 and aspartate 95. Serine 114 serves as a coordination point for 4-amino-2-methyl-5-(diphosphooxymethyl)pyrimidine. 140 to 142 contributes to the 2-[(2R,5Z)-2-carboxy-4-methylthiazol-5(2H)-ylidene]ethyl phosphate binding site; the sequence is TST. Residue lysine 143 coordinates 4-amino-2-methyl-5-(diphosphooxymethyl)pyrimidine. 2-[(2R,5Z)-2-carboxy-4-methylthiazol-5(2H)-ylidene]ethyl phosphate contacts are provided by residues glycine 170 and 190–191; that span reads IS.

It belongs to the thiamine-phosphate synthase family. It depends on Mg(2+) as a cofactor.

It catalyses the reaction 2-[(2R,5Z)-2-carboxy-4-methylthiazol-5(2H)-ylidene]ethyl phosphate + 4-amino-2-methyl-5-(diphosphooxymethyl)pyrimidine + 2 H(+) = thiamine phosphate + CO2 + diphosphate. It carries out the reaction 2-(2-carboxy-4-methylthiazol-5-yl)ethyl phosphate + 4-amino-2-methyl-5-(diphosphooxymethyl)pyrimidine + 2 H(+) = thiamine phosphate + CO2 + diphosphate. The enzyme catalyses 4-methyl-5-(2-phosphooxyethyl)-thiazole + 4-amino-2-methyl-5-(diphosphooxymethyl)pyrimidine + H(+) = thiamine phosphate + diphosphate. It functions in the pathway cofactor biosynthesis; thiamine diphosphate biosynthesis; thiamine phosphate from 4-amino-2-methyl-5-diphosphomethylpyrimidine and 4-methyl-5-(2-phosphoethyl)-thiazole: step 1/1. Its function is as follows. Condenses 4-methyl-5-(beta-hydroxyethyl)thiazole monophosphate (THZ-P) and 2-methyl-4-amino-5-hydroxymethyl pyrimidine pyrophosphate (HMP-PP) to form thiamine monophosphate (TMP). This is Thiamine-phosphate synthase from Clostridioides difficile (strain 630) (Peptoclostridium difficile).